A 485-amino-acid chain; its full sequence is Rhamnulokinase (485 aa).

An ATP-binding site is contributed by 8–12 (ASSGR). Substrate-binding positions include G78 and 231–233 (HDT). The active-site Proton acceptor is the D232. T254 provides a ligand contact to ATP. N291 contacts substrate. Q299 provides a ligand contact to ATP. C348 and C365 are disulfide-bonded. G397 lines the ATP pocket. C408 and C412 form a disulfide bridge.

It belongs to the rhamnulokinase family. Requires Mg(2+) as cofactor.

It catalyses the reaction L-rhamnulose + ATP = L-rhamnulose 1-phosphate + ADP + H(+). The protein operates within carbohydrate degradation; L-rhamnose degradation; glycerone phosphate from L-rhamnose: step 2/3. In terms of biological role, involved in the catabolism of L-rhamnose (6-deoxy-L-mannose). Catalyzes the transfer of the gamma-phosphate group from ATP to the 1-hydroxyl group of L-rhamnulose to yield L-rhamnulose 1-phosphate. The chain is Rhamnulokinase from Yersinia pestis bv. Antiqua (strain Antiqua).